The sequence spans 178 residues: MPAAYIKSVIKTVPDYPKPGILFRDVTSILEDHKAYTTSIELLVKEFAPYNFDKVAGTEARGFLFGAPLAIELGIGFIPVRKPNKLPRKVISESYDLEYGTDCLEIHEDAVKPGEKVLMLDDLLATGGTMIATANLIRRLGGIVEHAGFVISLPDLGGEAKLQEIGVQSHSICEFEGE.

Belongs to the purine/pyrimidine phosphoribosyltransferase family. In terms of assembly, homodimer.

The protein resides in the cytoplasm. The enzyme catalyses AMP + diphosphate = 5-phospho-alpha-D-ribose 1-diphosphate + adenine. It functions in the pathway purine metabolism; AMP biosynthesis via salvage pathway; AMP from adenine: step 1/1. Catalyzes a salvage reaction resulting in the formation of AMP, that is energically less costly than de novo synthesis. The protein is Adenine phosphoribosyltransferase of Pseudoalteromonas atlantica (strain T6c / ATCC BAA-1087).